The sequence spans 432 residues: D-amino acid dehydrogenase (432 aa).

3 to 17 lines the FAD pocket; sequence VVVLGSGVVGVASAW.

This sequence belongs to the DadA oxidoreductase family. It depends on FAD as a cofactor.

The enzyme catalyses a D-alpha-amino acid + A + H2O = a 2-oxocarboxylate + AH2 + NH4(+). It participates in amino-acid degradation; D-alanine degradation; NH(3) and pyruvate from D-alanine: step 1/1. In terms of biological role, oxidative deamination of D-amino acids. The sequence is that of D-amino acid dehydrogenase from Cronobacter sakazakii (strain ATCC BAA-894) (Enterobacter sakazakii).